The primary structure comprises 124 residues: Small ribosomal subunit protein uS12 (124 aa).

A 3-methylthioaspartic acid modification is found at Asp89.

It belongs to the universal ribosomal protein uS12 family. As to quaternary structure, part of the 30S ribosomal subunit. Contacts proteins S8 and S17. May interact with IF1 in the 30S initiation complex.

In terms of biological role, with S4 and S5 plays an important role in translational accuracy. Its function is as follows. Interacts with and stabilizes bases of the 16S rRNA that are involved in tRNA selection in the A site and with the mRNA backbone. Located at the interface of the 30S and 50S subunits, it traverses the body of the 30S subunit contacting proteins on the other side and probably holding the rRNA structure together. The combined cluster of proteins S8, S12 and S17 appears to hold together the shoulder and platform of the 30S subunit. This is Small ribosomal subunit protein uS12 from Prochlorococcus marinus (strain SARG / CCMP1375 / SS120).